Here is a 487-residue protein sequence, read N- to C-terminus: Glutamyl-tRNA(Gln) amidotransferase subunit A (487 aa).

Active-site charge relay system residues include Lys-77 and Ser-152. Ser-176 functions as the Acyl-ester intermediate in the catalytic mechanism.

The protein belongs to the amidase family. GatA subfamily. As to quaternary structure, heterotrimer of A, B and C subunits.

It catalyses the reaction L-glutamyl-tRNA(Gln) + L-glutamine + ATP + H2O = L-glutaminyl-tRNA(Gln) + L-glutamate + ADP + phosphate + H(+). In terms of biological role, allows the formation of correctly charged Gln-tRNA(Gln) through the transamidation of misacylated Glu-tRNA(Gln) in organisms which lack glutaminyl-tRNA synthetase. The reaction takes place in the presence of glutamine and ATP through an activated gamma-phospho-Glu-tRNA(Gln). The polypeptide is Glutamyl-tRNA(Gln) amidotransferase subunit A (Lactiplantibacillus plantarum (strain ATCC BAA-793 / NCIMB 8826 / WCFS1) (Lactobacillus plantarum)).